The primary structure comprises 402 residues: MKLMTMPSEFQKALPILTKIKEAGYEAYFVGGSVRDVLLERPIHDVDIATSSYPEETKAIFNRTVDVGIEHGTVLVLENGGEYEITTFRTEDVYVDYRRPSQVSFVRSLEEDLKRRDFTVNALALDENGQVIDKFRGLIDLEQKRLRAVGKAEERFEEDALRIMRGFRFAASLDFDIEAATFEAMRSHSPLLEKISVERSFTEFDKLLMAPHWRKGISAMIACQAYDYLPGLKQREAGLNHLIVSLKDNFTFSDHHQAWAYVMISLAIEDPKSFLKAWKTSNDFQRYVTKLIALYRIRQERSFEKLDIYQYGKEMASLVEGLRKAQSLSVDMDHIEALDQALAIHNKHDIVLNGSHLIKDFGMEPGPQLGLMLEKVELAIVEGCLDNDFTTIEAFVREELAT.

Positions 32 and 35 each coordinate ATP. 2 residues coordinate CTP: Gly-32 and Arg-35. Mg(2+) contacts are provided by Asp-45 and Asp-47. The ATP site is built by Arg-116, Asp-159, Arg-162, Arg-165, and Arg-168. The CTP site is built by Arg-116, Asp-159, Arg-162, Arg-165, and Arg-168.

It belongs to the tRNA nucleotidyltransferase/poly(A) polymerase family. Bacterial CCA-adding enzyme type 3 subfamily. Homodimer. Mg(2+) is required as a cofactor.

The catalysed reaction is a tRNA precursor + 2 CTP + ATP = a tRNA with a 3' CCA end + 3 diphosphate. The enzyme catalyses a tRNA with a 3' CCA end + 2 CTP + ATP = a tRNA with a 3' CCACCA end + 3 diphosphate. In terms of biological role, catalyzes the addition and repair of the essential 3'-terminal CCA sequence in tRNAs without using a nucleic acid template. Adds these three nucleotides in the order of C, C, and A to the tRNA nucleotide-73, using CTP and ATP as substrates and producing inorganic pyrophosphate. tRNA 3'-terminal CCA addition is required both for tRNA processing and repair. Also involved in tRNA surveillance by mediating tandem CCA addition to generate a CCACCA at the 3' terminus of unstable tRNAs. While stable tRNAs receive only 3'-terminal CCA, unstable tRNAs are marked with CCACCA and rapidly degraded. This Streptococcus pyogenes serotype M4 (strain MGAS10750) protein is CCA-adding enzyme.